The sequence spans 122 residues: NADH-quinone oxidoreductase subunit A (122 aa).

Helical transmembrane passes span 12-32, 66-86, and 91-111; these read IIIF…VNLI, LVAI…PWAI, and IGGL…VGFI.

It belongs to the complex I subunit 3 family. NDH-1 is composed of 14 different subunits. Subunits NuoA, H, J, K, L, M, N constitute the membrane sector of the complex.

Its subcellular location is the cell inner membrane. The catalysed reaction is a quinone + NADH + 5 H(+)(in) = a quinol + NAD(+) + 4 H(+)(out). NDH-1 shuttles electrons from NADH, via FMN and iron-sulfur (Fe-S) centers, to quinones in the respiratory chain. The immediate electron acceptor for the enzyme in this species is believed to be ubiquinone. Couples the redox reaction to proton translocation (for every two electrons transferred, four hydrogen ions are translocated across the cytoplasmic membrane), and thus conserves the redox energy in a proton gradient. This chain is NADH-quinone oxidoreductase subunit A, found in Pelagibacter ubique (strain HTCC1062).